The primary structure comprises 354 residues: Ferrochelatase (354 aa).

Residues H214 and E295 each contribute to the Fe cation site.

It belongs to the ferrochelatase family.

Its subcellular location is the cytoplasm. It carries out the reaction heme b + 2 H(+) = protoporphyrin IX + Fe(2+). The protein operates within porphyrin-containing compound metabolism; protoheme biosynthesis; protoheme from protoporphyrin-IX: step 1/1. Functionally, catalyzes the ferrous insertion into protoporphyrin IX. The polypeptide is Ferrochelatase (Burkholderia vietnamiensis (strain G4 / LMG 22486) (Burkholderia cepacia (strain R1808))).